Reading from the N-terminus, the 554-residue chain is Glutamine--tRNA ligase (554 aa).

A 'HIGH' region motif is present at residues 34-44 (PEPNGYLHIGH). ATP is bound by residues 35 to 37 (EPN) and 41 to 47 (HIGHAKS). The L-glutamine site is built by D67 and Y212. Residues T231, 261–262 (RL), and 269–271 (MSK) contribute to the ATP site. The short motif at 268–272 (VMSKR) is the 'KMSKS' region element. An interaction with tRNA region spans residues 317 to 324 (TKQDNTIE).

The protein belongs to the class-I aminoacyl-tRNA synthetase family. Monomer.

The protein localises to the cytoplasm. The enzyme catalyses tRNA(Gln) + L-glutamine + ATP = L-glutaminyl-tRNA(Gln) + AMP + diphosphate. This chain is Glutamine--tRNA ligase, found in Escherichia coli O157:H7.